Reading from the N-terminus, the 873-residue chain is DNA mismatch repair protein PMS1 (873 aa).

The tract at residues 1–357 (MTQIHQINDI…FKTTLSDYYN (357 aa)) is DNA- and ATP-binding. Positions 379-402 (LKTEVFDDRSTTHESDNENYHTAR) are enriched in basic and acidic residues. The disordered stretch occupies residues 379–423 (LKTEVFDDRSTTHESDNENYHTARSESNQSNHAHFNSTTGVIDKS). S393 is subject to Phosphoserine. A compositionally biased stretch (polar residues) spans 403 to 423 (SESNQSNHAHFNSTTGVIDKS). S566 is subject to Phosphoserine. The tract at residues 661–873 (YLTLTVSKND…WSSFSKDYEI (213 aa)) is interaction with MLH1.

It belongs to the DNA mismatch repair MutL/HexB family. As to quaternary structure, heterodimer of MLH1 and PMS1, called MutLalpha, which is the major MMR MutL activity correcting base-base mismatches as well as IDLs. The heterodimer binds double strand DNA independently of a mismatch with positive cooperativity and has more than one DNA binding site. Forms a ternary complex with either the MSH2-MSH6 (MutSalpha) or the MSH2-MSH3 heterodimer (MutSbeta), which recognize and bind to mismatch DNA. Ternary complex formation is promoted by ATP binding.

Its subcellular location is the nucleus. In terms of biological role, required for DNA mismatch repair (MMR), correcting base-base mismatches and insertion-deletion loops (IDLs) resulting from DNA replication, DNA damage or from recombination events between non-identical sequences during meiosis. Component of the MutLalpha heterodimer that forms a ternary complex with the MutS heterodimers, which initially recognize the DNA mismatches. This complex is thought to be responsible for directing the downstream MMR events, including strand discrimination, excision, and resynthesis. Plays a major role in maintaining the genetic stability of simple sequence repeats and in the repair of heteroduplex sites present in meiotic recombination intermediates. The chain is DNA mismatch repair protein PMS1 (PMS1) from Saccharomyces cerevisiae (strain ATCC 204508 / S288c) (Baker's yeast).